We begin with the raw amino-acid sequence, 308 residues long: Glutamyl-Q tRNA(Asp) synthetase (308 aa).

L-glutamate is bound by residues 19–23 and Glu-55; that span reads RFAPS. The 'HIGH' region signature appears at 22 to 32; it reads PSPSGELHFGS. Zn(2+) is bound by residues Cys-111, Cys-113, Tyr-125, and Cys-129. The L-glutamate site is built by Tyr-182 and Arg-200. The 'KMSKS' region motif lies at 238 to 242; the sequence is KLSKQ. An ATP-binding site is contributed by Lys-241.

The protein belongs to the class-I aminoacyl-tRNA synthetase family. GluQ subfamily. Requires Zn(2+) as cofactor.

Functionally, catalyzes the tRNA-independent activation of glutamate in presence of ATP and the subsequent transfer of glutamate onto a tRNA(Asp). Glutamate is transferred on the 2-amino-5-(4,5-dihydroxy-2-cyclopenten-1-yl) moiety of the queuosine in the wobble position of the QUC anticodon. The sequence is that of Glutamyl-Q tRNA(Asp) synthetase from Shigella flexneri.